Consider the following 395-residue polypeptide: Cystathionine beta-lyase (395 aa).

An N6-(pyridoxal phosphate)lysine modification is found at Lys210.

Belongs to the trans-sulfuration enzymes family. In terms of assembly, homotetramer. It depends on pyridoxal 5'-phosphate as a cofactor.

It localises to the cytoplasm. It carries out the reaction L,L-cystathionine + H2O = L-homocysteine + pyruvate + NH4(+). The catalysed reaction is an S-substituted L-cysteine + H2O = a thiol + pyruvate + NH4(+). It participates in amino-acid biosynthesis; L-methionine biosynthesis via de novo pathway; L-homocysteine from L-cystathionine: step 1/1. Catalyzes the cleavage of cystathionine to homocysteine, pyruvate and ammonia during methionine biosynthesis. The protein is Cystathionine beta-lyase (metC) of Salmonella typhimurium (strain LT2 / SGSC1412 / ATCC 700720).